Consider the following 338-residue polypeptide: Phenylalanine--tRNA ligase alpha subunit (338 aa).

E253 lines the Mg(2+) pocket.

This sequence belongs to the class-II aminoacyl-tRNA synthetase family. Phe-tRNA synthetase alpha subunit type 1 subfamily. In terms of assembly, tetramer of two alpha and two beta subunits. Requires Mg(2+) as cofactor.

It localises to the cytoplasm. It catalyses the reaction tRNA(Phe) + L-phenylalanine + ATP = L-phenylalanyl-tRNA(Phe) + AMP + diphosphate + H(+). The sequence is that of Phenylalanine--tRNA ligase alpha subunit from Citrifermentans bemidjiense (strain ATCC BAA-1014 / DSM 16622 / JCM 12645 / Bem) (Geobacter bemidjiensis).